Reading from the N-terminus, the 508-residue chain is Photosystem II CP47 reaction center protein (508 aa).

The next 6 helical transmembrane spans lie at 21–36 (SVHI…WAGS), 101–115 (IVFS…IWHW), 140–156 (GIHL…FGAF), 203–218 (IAAG…FHLS), 237–252 (VLSS…AFVV), and 457–472 (SFAL…HGAR).

The protein belongs to the PsbB/PsbC family. PsbB subfamily. In terms of assembly, PSII is composed of 1 copy each of membrane proteins PsbA, PsbB, PsbC, PsbD, PsbE, PsbF, PsbH, PsbI, PsbJ, PsbK, PsbL, PsbM, PsbT, PsbX, PsbY, PsbZ, Psb30/Ycf12, at least 3 peripheral proteins of the oxygen-evolving complex and a large number of cofactors. It forms dimeric complexes. It depends on Binds multiple chlorophylls. PSII binds additional chlorophylls, carotenoids and specific lipids. as a cofactor.

Its subcellular location is the plastid. The protein localises to the chloroplast thylakoid membrane. Functionally, one of the components of the core complex of photosystem II (PSII). It binds chlorophyll and helps catalyze the primary light-induced photochemical processes of PSII. PSII is a light-driven water:plastoquinone oxidoreductase, using light energy to abstract electrons from H(2)O, generating O(2) and a proton gradient subsequently used for ATP formation. The sequence is that of Photosystem II CP47 reaction center protein from Atropa belladonna (Belladonna).